Reading from the N-terminus, the 251-residue chain is Protein FAM216A (251 aa).

The span at 1–16 shows a compositional bias: polar residues; the sequence is MPNQGPVSDWTECSSS. Positions 1–49 are disordered; it reads MPNQGPVSDWTECSSSAEPPAVARAEGGGGGSAGHSYYQNSKDRIKDGH.

This sequence belongs to the FAM216 family.

In Bos taurus (Bovine), this protein is Protein FAM216A (FAM216A).